Reading from the N-terminus, the 335-residue chain is Pyridoxal 5'-phosphate synthase subunit PdxS (335 aa).

Asp30 provides a ligand contact to D-ribose 5-phosphate. Lys87 (schiff-base intermediate with D-ribose 5-phosphate) is an active-site residue. Gly159 contributes to the D-ribose 5-phosphate binding site. Position 171 (Arg171) interacts with D-glyceraldehyde 3-phosphate. Residues Gly257 and 278-279 contribute to the D-ribose 5-phosphate site; that span reads GS.

It belongs to the PdxS/SNZ family. In the presence of PdxT, forms a dodecamer of heterodimers.

It carries out the reaction aldehydo-D-ribose 5-phosphate + D-glyceraldehyde 3-phosphate + L-glutamine = pyridoxal 5'-phosphate + L-glutamate + phosphate + 3 H2O + H(+). Its pathway is cofactor biosynthesis; pyridoxal 5'-phosphate biosynthesis. Its function is as follows. Catalyzes the formation of pyridoxal 5'-phosphate from ribose 5-phosphate (RBP), glyceraldehyde 3-phosphate (G3P) and ammonia. The ammonia is provided by the PdxT subunit. Can also use ribulose 5-phosphate and dihydroxyacetone phosphate as substrates, resulting from enzyme-catalyzed isomerization of RBP and G3P, respectively. The protein is Pyridoxal 5'-phosphate synthase subunit PdxS of Thermococcus kodakarensis (strain ATCC BAA-918 / JCM 12380 / KOD1) (Pyrococcus kodakaraensis (strain KOD1)).